A 206-amino-acid polypeptide reads, in one-letter code: Phosphoribosyl-dephospho-CoA transferase (206 aa).

Residues Asp-131 and Asp-133 contribute to the active site.

This sequence belongs to the MdcG family.

It carries out the reaction apo-[malonate decarboxylase ACP] + 2'-(5''-triphospho-alpha-D-ribosyl)-3'-dephospho-CoA = holo-[malonate decarboxylase ACP] + diphosphate. Transfers 2'-(5-triphosphoribosyl)-3'-dephosphocoenzyme-A to the apo-[acyl-carrier-protein] of the malonate decarboxylase to yield holo-[acyl-carrier-protein]. This chain is Phosphoribosyl-dephospho-CoA transferase, found in Pseudomonas fluorescens (strain Pf0-1).